The sequence spans 70 residues: Cytochrome c oxidase subunit 8B, mitochondrial (70 aa).

A mitochondrion-targeting transit peptide spans 1 to 24 (MLSLRPALRLLQAPLRCWAVPKAH). Over 25 to 35 (VSAKPAETPTS) the chain is Mitochondrial matrix. Residues 36-59 (PAEQAVGLSFIFITFLGPAGWILS) traverse the membrane as a helical segment. At 60 to 70 (HVENYKKRPRA) the chain is on the mitochondrial intermembrane side.

The protein belongs to the cytochrome c oxidase VIII family. In terms of assembly, component of the cytochrome c oxidase (complex IV, CIV), a multisubunit enzyme composed of 14 subunits. The complex is composed of a catalytic core of 3 subunits MT-CO1, MT-CO2 and MT-CO3, encoded in the mitochondrial DNA, and 11 supernumerary subunits COX4I, COX5A, COX5B, COX6A, COX6B, COX6C, COX7A, COX7B, COX7C, COX8 and NDUFA4, which are encoded in the nuclear genome. The complex exists as a monomer or a dimer and forms supercomplexes (SCs) in the inner mitochondrial membrane with NADH-ubiquinone oxidoreductase (complex I, CI) and ubiquinol-cytochrome c oxidoreductase (cytochrome b-c1 complex, complex III, CIII), resulting in different assemblies (supercomplex SCI(1)III(2)IV(1) and megacomplex MCI(2)III(2)IV(2)).

The protein localises to the mitochondrion inner membrane. Its pathway is energy metabolism; oxidative phosphorylation. Component of the cytochrome c oxidase, the last enzyme in the mitochondrial electron transport chain which drives oxidative phosphorylation. The respiratory chain contains 3 multisubunit complexes succinate dehydrogenase (complex II, CII), ubiquinol-cytochrome c oxidoreductase (cytochrome b-c1 complex, complex III, CIII) and cytochrome c oxidase (complex IV, CIV), that cooperate to transfer electrons derived from NADH and succinate to molecular oxygen, creating an electrochemical gradient over the inner membrane that drives transmembrane transport and the ATP synthase. Cytochrome c oxidase is the component of the respiratory chain that catalyzes the reduction of oxygen to water. Electrons originating from reduced cytochrome c in the intermembrane space (IMS) are transferred via the dinuclear copper A center (CU(A)) of subunit 2 and heme A of subunit 1 to the active site in subunit 1, a binuclear center (BNC) formed by heme A3 and copper B (CU(B)). The BNC reduces molecular oxygen to 2 water molecules using 4 electrons from cytochrome c in the IMS and 4 protons from the mitochondrial matrix. The protein is Cytochrome c oxidase subunit 8B, mitochondrial (COX8B) of Ateles belzebuth (White-bellied spider monkey).